A 238-amino-acid chain; its full sequence is Cysteine-rich venom protein pseudechetoxin (238 aa).

An N-terminal signal peptide occupies residues 1-19; it reads MIAFIVLLSLAAVLQQSSG. The propeptide occupies 20-27; the sequence is TADFASES. An SCP domain is found at 38–164; sequence VDKHNALRRS…SSKYLYVCQY (127 aa). Zn(2+)-binding residues include T51 and S106. 8 disulfides stabilise this stretch: C75/C153, C92/C165, C148/C162, C184/C191, C187/C196, C200/C233, C209/C227, and C218/C231. Residues 200-233 form the ShKT domain; that stretch reads CKRNNDFSNCKSLAKKSKCQTEWIKKKCPASCFC.

In terms of tissue distribution, expressed by the venom gland.

The protein localises to the secreted. Its function is as follows. Blocks olfactory (CNGA2) and retinal (CNGA1) cyclic nucleotide-gated (CNG) ion channel currents. Does not inhibit retinal (CNGA3) currents. It forms high-affinity contacts with the pore turret region and most likely inhibits CNG channel current by blocking the external entrance to the transmembrane pore. Is really more potent that Pseudecin. Does not affect neither depolarization- nor caffeine-induced contraction arterial smooth muscle. This chain is Cysteine-rich venom protein pseudechetoxin, found in Pseudechis australis (Mulga snake).